Consider the following 631-residue polypeptide: Chaperone protein HtpG (631 aa).

Residues 1–338 are a; substrate-binding; that stretch reads MILKEQETLG…CNDLPLNISR (338 aa). The b stretch occupies residues 339–554; that stretch reads EMLQHNRITQ…SNNMTTHMAK (216 aa). The tract at residues 555–631 is c; sequence LIVASGQNKP…KLLNHDTIVN (77 aa).

This sequence belongs to the heat shock protein 90 family. As to quaternary structure, homodimer.

The protein resides in the cytoplasm. In terms of biological role, molecular chaperone. Has ATPase activity. The polypeptide is Chaperone protein HtpG (Baumannia cicadellinicola subsp. Homalodisca coagulata).